A 572-amino-acid chain; its full sequence is Proline--tRNA ligase (572 aa).

Belongs to the class-II aminoacyl-tRNA synthetase family. ProS type 1 subfamily. In terms of assembly, homodimer.

It is found in the cytoplasm. The catalysed reaction is tRNA(Pro) + L-proline + ATP = L-prolyl-tRNA(Pro) + AMP + diphosphate. Functionally, catalyzes the attachment of proline to tRNA(Pro) in a two-step reaction: proline is first activated by ATP to form Pro-AMP and then transferred to the acceptor end of tRNA(Pro). As ProRS can inadvertently accommodate and process non-cognate amino acids such as alanine and cysteine, to avoid such errors it has two additional distinct editing activities against alanine. One activity is designated as 'pretransfer' editing and involves the tRNA(Pro)-independent hydrolysis of activated Ala-AMP. The other activity is designated 'posttransfer' editing and involves deacylation of mischarged Ala-tRNA(Pro). The misacylated Cys-tRNA(Pro) is not edited by ProRS. The polypeptide is Proline--tRNA ligase (Salmonella dublin (strain CT_02021853)).